The sequence spans 324 residues: 7,8-didemethyl-8-hydroxy-5-deazariboflavin synthase (324 aa).

The region spanning 4–239 (VTYSKNVFIP…QEVAIQIPPN (236 aa)) is the Radical SAM core domain. C18, C22, and C25 together coordinate [4Fe-4S] cluster.

It belongs to the radical SAM superfamily. CofG family. In terms of assembly, consists of two subunits, CofG and CofH. [4Fe-4S] cluster serves as cofactor.

It carries out the reaction 5-amino-5-(4-hydroxybenzyl)-6-(D-ribitylimino)-5,6-dihydrouracil + S-adenosyl-L-methionine = 7,8-didemethyl-8-hydroxy-5-deazariboflavin + 5'-deoxyadenosine + L-methionine + NH4(+) + H(+). Its pathway is cofactor biosynthesis; coenzyme F0 biosynthesis. Functionally, catalyzes the radical-mediated synthesis of 7,8-didemethyl-8-hydroxy-5-deazariboflavin from 5-amino-5-(4-hydroxybenzyl)-6-(D-ribitylimino)-5,6-dihydrouracil. The protein is 7,8-didemethyl-8-hydroxy-5-deazariboflavin synthase of Archaeoglobus fulgidus (strain ATCC 49558 / DSM 4304 / JCM 9628 / NBRC 100126 / VC-16).